We begin with the raw amino-acid sequence, 673 residues long: UvrABC system protein B (673 aa).

A Helicase ATP-binding domain is found at 26-183; the sequence is EGLEDGLAHQ…RRLAELQYTR (158 aa). 39 to 46 lines the ATP pocket; it reads GVTGSGKT. The Beta-hairpin motif lies at 92 to 115; sequence YYDYYQPEAYVPSSDTFIEKDASV. The Helicase C-terminal domain occupies 431-597; that stretch reads QVDDLLSEIR…GLNKKVVDIL (167 aa). In terms of domain architecture, UVR spans 633-668; it reads QQKIHELEGQMMQHAQNLEFEEAAQIRDQLHQLREL.

Belongs to the UvrB family. As to quaternary structure, forms a heterotetramer with UvrA during the search for lesions. Interacts with UvrC in an incision complex.

It localises to the cytoplasm. In terms of biological role, the UvrABC repair system catalyzes the recognition and processing of DNA lesions. A damage recognition complex composed of 2 UvrA and 2 UvrB subunits scans DNA for abnormalities. Upon binding of the UvrA(2)B(2) complex to a putative damaged site, the DNA wraps around one UvrB monomer. DNA wrap is dependent on ATP binding by UvrB and probably causes local melting of the DNA helix, facilitating insertion of UvrB beta-hairpin between the DNA strands. Then UvrB probes one DNA strand for the presence of a lesion. If a lesion is found the UvrA subunits dissociate and the UvrB-DNA preincision complex is formed. This complex is subsequently bound by UvrC and the second UvrB is released. If no lesion is found, the DNA wraps around the other UvrB subunit that will check the other stand for damage. This is UvrABC system protein B from Salmonella heidelberg (strain SL476).